A 572-amino-acid polypeptide reads, in one-letter code: Urease subunit alpha (572 aa).

The 441-residue stretch at 132-572 folds into the Urease domain; the sequence is GGFDSHIHFI…LPMAQRYFMY (441 aa). Ni(2+)-binding residues include histidine 137, histidine 139, and lysine 220. Lysine 220 is subject to N6-carboxylysine. A substrate-binding site is contributed by histidine 222. Ni(2+) contacts are provided by histidine 249 and histidine 275. Histidine 323 (proton donor) is an active-site residue. Aspartate 363 is a Ni(2+) binding site.

This sequence belongs to the metallo-dependent hydrolases superfamily. Urease alpha subunit family. Heterotrimer of UreA (gamma), UreB (beta) and UreC (alpha) subunits. Three heterotrimers associate to form the active enzyme. Requires Ni cation as cofactor. Post-translationally, carboxylation allows a single lysine to coordinate two nickel ions.

Its subcellular location is the cytoplasm. The enzyme catalyses urea + 2 H2O + H(+) = hydrogencarbonate + 2 NH4(+). The protein operates within nitrogen metabolism; urea degradation; CO(2) and NH(3) from urea (urease route): step 1/1. This is Urease subunit alpha from Bradyrhizobium diazoefficiens (strain JCM 10833 / BCRC 13528 / IAM 13628 / NBRC 14792 / USDA 110).